Reading from the N-terminus, the 635-residue chain is Nuclear distribution protein nudE homolog 1 (635 aa).

A coiled-coil region spans residues 14–192 (EKEIKHWKSK…TILRDLVTRS (179 aa)). 5 disordered regions span residues 35–63 (ESSL…NKTI), 200–267 (TMAS…LSRD), 279–328 (VLDD…SARA), 389–504 (SRVV…DHDP), and 516–635 (AAQA…TETF). The span at 43 to 56 (ESSKELEQEMEKEL) shows a compositional bias: basic and acidic residues. Composition is skewed to polar residues over residues 201 to 224 (MASS…SPIK) and 237 to 246 (SRQALSSPVT). Residues 280 to 299 (LDDSPTATTTSAAPTRSSTL) show a composition bias toward low complexity. 2 stretches are compositionally biased toward polar residues: residues 314–326 (ASTS…SPSA) and 411–428 (GSPS…TSTP). Residues 516–541 (AAQASVAKRRTSMSGSGMSHSASHGS) show a composition bias toward low complexity. Polar residues-rich tracts occupy residues 547 to 571 (SGST…SSMT) and 580 to 619 (SKRT…PAQT). The span at 620 to 635 (LSRSRSSSLGSETETF) shows a compositional bias: low complexity.

Belongs to the nudE family. As to quaternary structure, self-associates. Interacts with PAC1.

Its subcellular location is the cytoplasm. The protein resides in the cytoskeleton. Required for nuclear migration. The chain is Nuclear distribution protein nudE homolog 1 (NDE1) from Mycosarcoma maydis (Corn smut fungus).